The primary structure comprises 220 residues: 7-cyano-7-deazaguanine synthase (220 aa).

10 to 20 (FSGGQDSTTCL) contributes to the ATP binding site. 4 residues coordinate Zn(2+): C186, C195, C198, and C201.

Belongs to the QueC family. Homodimer. Requires Zn(2+) as cofactor.

The catalysed reaction is 7-carboxy-7-deazaguanine + NH4(+) + ATP = 7-cyano-7-deazaguanine + ADP + phosphate + H2O + H(+). Its pathway is purine metabolism; 7-cyano-7-deazaguanine biosynthesis. Its function is as follows. Catalyzes the ATP-dependent conversion of 7-carboxy-7-deazaguanine (CDG) to 7-cyano-7-deazaguanine (preQ(0)). This is 7-cyano-7-deazaguanine synthase from Bacillus cereus (strain AH187).